The sequence spans 103 residues: Small ribosomal subunit protein uS10 (103 aa).

The protein belongs to the universal ribosomal protein uS10 family. As to quaternary structure, part of the 30S ribosomal subunit.

Involved in the binding of tRNA to the ribosomes. The protein is Small ribosomal subunit protein uS10 of Pseudomonas savastanoi pv. phaseolicola (strain 1448A / Race 6) (Pseudomonas syringae pv. phaseolicola (strain 1448A / Race 6)).